We begin with the raw amino-acid sequence, 203 residues long: Endo-type membrane-bound lytic murein transglycosylase A (203 aa).

Residues 1–15 (MKLRWFAFLMVLLAG) form the signal peptide. Cys-16 carries the N-palmitoyl cysteine lipid modification. A lipid anchor (S-diacylglycerol cysteine) is attached at Cys-16.

Belongs to the transglycosylase Slt family.

It localises to the cell outer membrane. The catalysed reaction is Endolytic cleavage of the (1-&gt;4)-beta-glycosidic linkage between N-acetylmuramic acid (MurNAc) and N-acetylglucosamine (GlcNAc) residues in peptidoglycan with concomitant formation of a 1,6-anhydrobond in the MurNAc residue.. In terms of biological role, murein-degrading enzyme. May play a role in recycling of muropeptides during cell elongation and/or cell division. Preferentially cleaves at a distance of more than two disaccharide units from the ends of the glycan chain. The sequence is that of Endo-type membrane-bound lytic murein transglycosylase A from Enterobacter sp. (strain 638).